Reading from the N-terminus, the 85-residue chain is MPAPLTLDGFRADLAEFLYQQPDEVDLEENPLYAGLDSLRIVTLIERWRETGADVSFIELAECTSFDQWWQLLSARQGGAGHVTA.

Positions 1-77 constitute a Carrier domain; the sequence is MPAPLTLDGF…QWWQLLSARQ (77 aa). Ser-38 carries the post-translational modification O-(pantetheine 4'-phosphoryl)serine.

Belongs to the acyl carrier protein (ACP) family. Requires pantetheine 4'-phosphate as cofactor.

Its pathway is lipid metabolism; fatty acid metabolism. Acyl-carrier protein (ACP) involved in the biosynthesis of a unique class of isonitrile lipopeptides (INLPs). Is the dedicated ACP for the loading of activated acyl groups catalyzed by ScoC. This chain is Acyl carrier protein ScoB, found in Streptomyces coeruleorubidus.